Here is a 148-residue protein sequence, read N- to C-terminus: SsrA-binding protein (148 aa).

Residues 119–148 (AKGKKQHDKRQSMKEADWKREKQRLIKHTR) are disordered. Basic and acidic residues predominate over residues 127 to 142 (KRQSMKEADWKREKQR).

It belongs to the SmpB family.

It is found in the cytoplasm. Its function is as follows. Required for rescue of stalled ribosomes mediated by trans-translation. Binds to transfer-messenger RNA (tmRNA), required for stable association of tmRNA with ribosomes. tmRNA and SmpB together mimic tRNA shape, replacing the anticodon stem-loop with SmpB. tmRNA is encoded by the ssrA gene; the 2 termini fold to resemble tRNA(Ala) and it encodes a 'tag peptide', a short internal open reading frame. During trans-translation Ala-aminoacylated tmRNA acts like a tRNA, entering the A-site of stalled ribosomes, displacing the stalled mRNA. The ribosome then switches to translate the ORF on the tmRNA; the nascent peptide is terminated with the 'tag peptide' encoded by the tmRNA and targeted for degradation. The ribosome is freed to recommence translation, which seems to be the essential function of trans-translation. The chain is SsrA-binding protein from Neisseria gonorrhoeae (strain ATCC 700825 / FA 1090).